The primary structure comprises 136 residues: Putative pre-16S rRNA nuclease (136 aa).

It belongs to the YqgF nuclease family.

It is found in the cytoplasm. Could be a nuclease involved in processing of the 5'-end of pre-16S rRNA. The protein is Putative pre-16S rRNA nuclease of Francisella tularensis subsp. novicida (strain U112).